The primary structure comprises 488 residues: Inosine-5'-monophosphate dehydrogenase (488 aa).

2 consecutive CBS domains span residues 94–150 (IVSE…SKTV) and 154–215 (MTKK…CKDE). NAD(+) contacts are provided by residues Asp-249, 249–251 (DSS), and 299–301 (GIG). Residues Gly-301 and Gly-303 each coordinate K(+). Residue Ser-304 coordinates IMP. Residue Cys-306 participates in K(+) binding. The active-site Thioimidate intermediate is the Cys-306. Residues 339-341 (DGG), 362-363 (GS), and 386-390 (YRGMG) contribute to the IMP site. Residue Arg-402 is the Proton acceptor of the active site. Position 416 (Glu-416) interacts with IMP. Residues Glu-470, Ser-471, and His-472 each coordinate K(+).

It belongs to the IMPDH/GMPR family. Homotetramer. K(+) is required as a cofactor.

It catalyses the reaction IMP + NAD(+) + H2O = XMP + NADH + H(+). The protein operates within purine metabolism; XMP biosynthesis via de novo pathway; XMP from IMP: step 1/1. With respect to regulation, mycophenolic acid (MPA) is a non-competitive inhibitor that prevents formation of the closed enzyme conformation by binding to the same site as the amobile flap. In contrast, mizoribine monophosphate (MZP) is a competitive inhibitor that induces the closed conformation. MPA is a potent inhibitor of mammalian IMPDHs but a poor inhibitor of the bacterial enzymes. MZP is a more potent inhibitor of bacterial IMPDH. Functionally, catalyzes the conversion of inosine 5'-phosphate (IMP) to xanthosine 5'-phosphate (XMP), the first committed and rate-limiting step in the de novo synthesis of guanine nucleotides, and therefore plays an important role in the regulation of cell growth. The chain is Inosine-5'-monophosphate dehydrogenase from Haemophilus influenzae (strain ATCC 51907 / DSM 11121 / KW20 / Rd).